We begin with the raw amino-acid sequence, 315 residues long: Ankyrin repeat domain-containing protein EMB506, chloroplastic (315 aa).

Residues 1-39 (MVSSVLSIPPQTCLLPRLPISDSVNCKSKIVYCLSTSVR) constitute a chloroplast transit peptide. Positions 44–65 (KRQSTARTRSFTETNRRTPSVQ) are enriched in polar residues. The disordered stretch occupies residues 44–106 (KRQSTARTRS…DNESDWEDDS (63 aa)). Residues 72–104 (EDPDDGSDSENEYEGEEEDGIGNDLDNESDWED) are compositionally biased toward acidic residues. ANK repeat units follow at residues 151–180 (KSWK…DIDD), 184–213 (DNQT…NPHL), 217–246 (DGAA…DVNV), 250–279 (EGWT…DKTR), and 283–307 (DGKL…VKLL).

In terms of assembly, interacts with AKR. No homodimerization observed. In terms of tissue distribution, expressed in roots, inflorescence stems, flowers, siliques, dry seeds and mature cauline leaves.

It is found in the plastid. It localises to the chloroplast. Its function is as follows. Involved in the initial differentiation of the proplastid during the embryo development. Also required for correct cotyledon, true leaf and cauline leaf margin development. The sequence is that of Ankyrin repeat domain-containing protein EMB506, chloroplastic (EMB506) from Arabidopsis thaliana (Mouse-ear cress).